Consider the following 262-residue polypeptide: Large ribosomal subunit protein uL10m (262 aa).

Residues 1–28 constitute a mitochondrion transit peptide; the sequence is MAAAVAGILRGGLPPRAAWLPTLQTVRH. The tract at residues 243 to 262 is disordered; that stretch reads GDCATSANEKLHPPDPAPDA.

It belongs to the universal ribosomal protein uL10 family. Component of the mitochondrial ribosome large subunit (39S) which comprises a 16S rRNA and about 50 distinct proteins.

It is found in the mitochondrion. The chain is Large ribosomal subunit protein uL10m (Mrpl10) from Mus musculus (Mouse).